The following is a 536-amino-acid chain: CTP synthase (536 aa).

The interval 1-267 is amidoligase domain; it reads MTKFIFVTGG…DDIVIKRLEL (267 aa). A CTP-binding site is contributed by Ser-13. Ser-13 lines the UTP pocket. Residue 14-19 participates in ATP binding; that stretch reads SLGKGI. L-glutamine is bound at residue Tyr-54. Asp-71 is an ATP binding site. Positions 71 and 141 each coordinate Mg(2+). CTP is bound by residues 148 to 150, 188 to 193, and Lys-224; these read DIE and KTKPTQ. UTP contacts are provided by residues 188–193 and Lys-224; that span reads KTKPTQ. An ATP-binding site is contributed by 240–242; the sequence is RDA. One can recognise a Glutamine amidotransferase type-1 domain in the interval 293-535; sequence TIGLVGKYVS…IEASLNHQQS (243 aa). Residue Gly-355 participates in L-glutamine binding. Catalysis depends on Cys-382, which acts as the Nucleophile; for glutamine hydrolysis. L-glutamine is bound by residues 383 to 386, Glu-406, and Arg-463; that span reads LGMQ. Catalysis depends on residues His-508 and Glu-510.

It belongs to the CTP synthase family. Homotetramer.

The enzyme catalyses UTP + L-glutamine + ATP + H2O = CTP + L-glutamate + ADP + phosphate + 2 H(+). It catalyses the reaction L-glutamine + H2O = L-glutamate + NH4(+). The catalysed reaction is UTP + NH4(+) + ATP = CTP + ADP + phosphate + 2 H(+). The protein operates within pyrimidine metabolism; CTP biosynthesis via de novo pathway; CTP from UDP: step 2/2. With respect to regulation, allosterically activated by GTP, when glutamine is the substrate; GTP has no effect on the reaction when ammonia is the substrate. The allosteric effector GTP functions by stabilizing the protein conformation that binds the tetrahedral intermediate(s) formed during glutamine hydrolysis. Inhibited by the product CTP, via allosteric rather than competitive inhibition. Functionally, catalyzes the ATP-dependent amination of UTP to CTP with either L-glutamine or ammonia as the source of nitrogen. Regulates intracellular CTP levels through interactions with the four ribonucleotide triphosphates. This chain is CTP synthase, found in Staphylococcus saprophyticus subsp. saprophyticus (strain ATCC 15305 / DSM 20229 / NCIMB 8711 / NCTC 7292 / S-41).